Reading from the N-terminus, the 183-residue chain is Adenine phosphoribosyltransferase (183 aa).

It belongs to the purine/pyrimidine phosphoribosyltransferase family. Homodimer.

The protein localises to the cytoplasm. It carries out the reaction AMP + diphosphate = 5-phospho-alpha-D-ribose 1-diphosphate + adenine. It participates in purine metabolism; AMP biosynthesis via salvage pathway; AMP from adenine: step 1/1. Its function is as follows. Catalyzes a salvage reaction resulting in the formation of AMP, that is energically less costly than de novo synthesis. This chain is Adenine phosphoribosyltransferase, found in Escherichia fergusonii (strain ATCC 35469 / DSM 13698 / CCUG 18766 / IAM 14443 / JCM 21226 / LMG 7866 / NBRC 102419 / NCTC 12128 / CDC 0568-73).